Here is a 240-residue protein sequence, read N- to C-terminus: Ribonuclease PH (240 aa).

Residues Arg87 and 125–127 contribute to the phosphate site; that span reads GTR.

This sequence belongs to the RNase PH family. As to quaternary structure, homohexameric ring arranged as a trimer of dimers.

It carries out the reaction tRNA(n+1) + phosphate = tRNA(n) + a ribonucleoside 5'-diphosphate. Phosphorolytic 3'-5' exoribonuclease that plays an important role in tRNA 3'-end maturation. Removes nucleotide residues following the 3'-CCA terminus of tRNAs; can also add nucleotides to the ends of RNA molecules by using nucleoside diphosphates as substrates, but this may not be physiologically important. Probably plays a role in initiation of 16S rRNA degradation (leading to ribosome degradation) during starvation. The chain is Ribonuclease PH from Stutzerimonas stutzeri (strain A1501) (Pseudomonas stutzeri).